Here is a 202-residue protein sequence, read N- to C-terminus: FMN-dependent NADH:quinone oxidoreductase (202 aa).

Residues S10, 16-18 (SAS), and 96-99 (MWNF) each bind FMN.

Belongs to the azoreductase type 1 family. In terms of assembly, homodimer. FMN is required as a cofactor.

The enzyme catalyses 2 a quinone + NADH + H(+) = 2 a 1,4-benzosemiquinone + NAD(+). The catalysed reaction is N,N-dimethyl-1,4-phenylenediamine + anthranilate + 2 NAD(+) = 2-(4-dimethylaminophenyl)diazenylbenzoate + 2 NADH + 2 H(+). Quinone reductase that provides resistance to thiol-specific stress caused by electrophilic quinones. In terms of biological role, also exhibits azoreductase activity. Catalyzes the reductive cleavage of the azo bond in aromatic azo compounds to the corresponding amines. In Beijerinckia indica subsp. indica (strain ATCC 9039 / DSM 1715 / NCIMB 8712), this protein is FMN-dependent NADH:quinone oxidoreductase.